The following is a 159-amino-acid chain: MQKRAIYPGTFDPITNGHIDIVTRATQMFDHVILAIAASPSKKPMFTLEERVALAQQATAHLGNVEVMGFSDLMANFARIQQANILIRGLRAVADFEYEMQLAHMNRHLMPQLESVFLMPSKEWSFISSSLVKEVARHQGDVTHFLPENVHQALMDKLK.

Residue Thr-10 participates in substrate binding. ATP-binding positions include 10 to 11 and His-18; that span reads TF. Positions 42, 74, and 88 each coordinate substrate. ATP is bound by residues 89-91, Glu-99, and 124-130; these read GLR and WSFISSS.

The protein belongs to the bacterial CoaD family. In terms of assembly, homohexamer. Mg(2+) serves as cofactor.

It is found in the cytoplasm. The enzyme catalyses (R)-4'-phosphopantetheine + ATP + H(+) = 3'-dephospho-CoA + diphosphate. Its pathway is cofactor biosynthesis; coenzyme A biosynthesis; CoA from (R)-pantothenate: step 4/5. Its function is as follows. Reversibly transfers an adenylyl group from ATP to 4'-phosphopantetheine, yielding dephospho-CoA (dPCoA) and pyrophosphate. In Citrobacter koseri (strain ATCC BAA-895 / CDC 4225-83 / SGSC4696), this protein is Phosphopantetheine adenylyltransferase.